Here is a 151-residue protein sequence, read N- to C-terminus: Major latex allergen Hev b 5 (151 aa).

A disordered region spans residues 1 to 151 (MASVEVESAA…TEVPVEKTEE (151 aa)). N-acetylalanine is present on alanine 2. A compositionally biased stretch (basic and acidic residues) spans 17–31 (ETPEVTKAEETKTEE). Composition is skewed to low complexity over residues 36–45 (PASEQETADA) and 53–64 (TAAPAEPEAPAP). Basic and acidic residues-rich tracts occupy residues 65–80 (ETEKAEEVEKIEKTEE), 103–113 (EEPKHETKETE), and 122–133 (EGEKPAEEEKPI). The segment covering 134-144 (TEAAETATTEV) has biased composition (low complexity).

It to kiwi fruit protein PKIWI501. The N-terminus is blocked.

This Hevea brasiliensis (Para rubber tree) protein is Major latex allergen Hev b 5.